Here is a 372-residue protein sequence, read N- to C-terminus: Protein-glutamate methylesterase/protein-glutamine glutaminase 1 (372 aa).

Residues 4 to 121 (KVLVVDDSSF…ATNKDDAILL (118 aa)) form the Response regulatory domain. Asp-55 carries the post-translational modification 4-aspartylphosphate. The tract at residues 138–174 (VVRPTTPTPPPRSSASSVLGGVSTHTQPAPVRSSHAA) is disordered. In terms of domain architecture, CheB-type methylesterase spans 179–372 (SGKQYKLLLI…ESILKESARG (194 aa)). Residues Ser-191, His-218, and Asp-314 contribute to the active site.

Belongs to the CheB family. Post-translationally, phosphorylated by CheA. Phosphorylation of the N-terminal regulatory domain activates the methylesterase activity.

Its subcellular location is the cytoplasm. It catalyses the reaction [protein]-L-glutamate 5-O-methyl ester + H2O = L-glutamyl-[protein] + methanol + H(+). The catalysed reaction is L-glutaminyl-[protein] + H2O = L-glutamyl-[protein] + NH4(+). In terms of biological role, involved in chemotaxis. Part of a chemotaxis signal transduction system that modulates chemotaxis in response to various stimuli. Catalyzes the demethylation of specific methylglutamate residues introduced into the chemoreceptors (methyl-accepting chemotaxis proteins or MCP) by CheR. Also mediates the irreversible deamidation of specific glutamine residues to glutamic acid. The chain is Protein-glutamate methylesterase/protein-glutamine glutaminase 1 from Shewanella sp. (strain MR-4).